A 156-amino-acid chain; its full sequence is Ribosome maturation factor RimP (156 aa).

Belongs to the RimP family.

Its subcellular location is the cytoplasm. Functionally, required for maturation of 30S ribosomal subunits. The chain is Ribosome maturation factor RimP from Gloeobacter violaceus (strain ATCC 29082 / PCC 7421).